The following is a 486-amino-acid chain: Aspartyl/glutamyl-tRNA(Asn/Gln) amidotransferase subunit B (486 aa).

This sequence belongs to the GatB/GatE family. GatB subfamily. In terms of assembly, heterotrimer of A, B and C subunits.

The enzyme catalyses L-glutamyl-tRNA(Gln) + L-glutamine + ATP + H2O = L-glutaminyl-tRNA(Gln) + L-glutamate + ADP + phosphate + H(+). It carries out the reaction L-aspartyl-tRNA(Asn) + L-glutamine + ATP + H2O = L-asparaginyl-tRNA(Asn) + L-glutamate + ADP + phosphate + 2 H(+). Its function is as follows. Allows the formation of correctly charged Asn-tRNA(Asn) or Gln-tRNA(Gln) through the transamidation of misacylated Asp-tRNA(Asn) or Glu-tRNA(Gln) in organisms which lack either or both of asparaginyl-tRNA or glutaminyl-tRNA synthetases. The reaction takes place in the presence of glutamine and ATP through an activated phospho-Asp-tRNA(Asn) or phospho-Glu-tRNA(Gln). The polypeptide is Aspartyl/glutamyl-tRNA(Asn/Gln) amidotransferase subunit B (Leptospira interrogans serogroup Icterohaemorrhagiae serovar Lai (strain 56601)).